Reading from the N-terminus, the 802-residue chain is Oligophrenin-1 (802 aa).

In terms of domain architecture, PH spans 265–368; that stretch reads QPTIEGYLYT…WMEAMDGKEP (104 aa). One can recognise a Rho-GAP domain in the interval 380–564; the sequence is MELNEVGFKF…ILIEHFGKIY (185 aa). Disordered regions lie at residues 569–588, 607–666, 680–770, and 783–802; these read EESA…RHKP, LDES…EPCP, GGTK…NAGE, and FETA…GDES. Residues 616–627 are compositionally biased toward polar residues; the sequence is HQTPNGTITSSI. Positions 716–732 are enriched in basic and acidic residues; sequence HHKEGDADSFSKVRPPG.

Interacts with HOMER1. Interacts with AMPA receptor complexes. Interacts with SH3GL2 (endophilin-A1). Interacts (via C-terminus) with NR1D1. As to expression, expressed in brain.

The protein resides in the postsynapse. It localises to the presynapse. The protein localises to the cell projection. It is found in the axon. Its subcellular location is the dendritic spine. The protein resides in the dendrite. It localises to the cytoplasm. Stimulates GTP hydrolysis of members of the Rho family. Its action on RHOA activity and signaling is implicated in growth and stabilization of dendritic spines, and therefore in synaptic function. Critical for the stabilization of AMPA receptors at postsynaptic sites. Critical for the regulation of synaptic vesicle endocytosis at presynaptic terminals. Required for the localization of NR1D1 to dendrites, can suppress its repressor activity and protect it from proteasomal degradation. The polypeptide is Oligophrenin-1 (OPHN1) (Homo sapiens (Human)).